We begin with the raw amino-acid sequence, 146 residues long: Anti-sigma F factor (146 aa).

This sequence belongs to the anti-sigma-factor family.

The catalysed reaction is L-seryl-[protein] + ATP = O-phospho-L-seryl-[protein] + ADP + H(+). It carries out the reaction L-threonyl-[protein] + ATP = O-phospho-L-threonyl-[protein] + ADP + H(+). Functionally, binds to sigma F and blocks its ability to form an RNA polymerase holoenzyme (E-sigma F). Phosphorylates SpoIIAA on a serine residue. This phosphorylation may enable SpoIIAA to act as an anti-anti-sigma factor that counteracts SpoIIAB and thus releases sigma F from inhibition. This chain is Anti-sigma F factor, found in Bacillus anthracis (strain A0248).